The sequence spans 631 residues: BTB/POZ domain-containing protein At1g67900 (631 aa).

One can recognise a BTB domain in the interval 28 to 93 (SDFTIEVSGS…CYGITITISA (66 aa)). Residues 200-509 (GWWAEDIAEL…VQVLFYEQAR (310 aa)) enclose the NPH3 domain. The tract at residues 361 to 399 (QTSPPTSPLRGKKGMMDRRRRSRSAENIDLEFQESRRSS) is disordered. The span at 370–382 (RGKKGMMDRRRRS) shows a compositional bias: basic residues. Phosphotyrosine is present on Tyr450. Ser567 carries the post-translational modification Phosphoserine.

This sequence belongs to the NPH3 family.

It participates in protein modification; protein ubiquitination. In terms of biological role, may act as a substrate-specific adapter of an E3 ubiquitin-protein ligase complex (CUL3-RBX1-BTB) which mediates the ubiquitination and subsequent proteasomal degradation of target proteins. This chain is BTB/POZ domain-containing protein At1g67900, found in Arabidopsis thaliana (Mouse-ear cress).